The primary structure comprises 184 residues: ATP synthase subunit b, chloroplastic (184 aa).

A helical transmembrane segment spans residues 27–49 (LATNPINLSVVLGVLIFFGKGVL).

Belongs to the ATPase B chain family. In terms of assembly, F-type ATPases have 2 components, F(1) - the catalytic core - and F(0) - the membrane proton channel. F(1) has five subunits: alpha(3), beta(3), gamma(1), delta(1), epsilon(1). F(0) has four main subunits: a(1), b(1), b'(1) and c(10-14). The alpha and beta chains form an alternating ring which encloses part of the gamma chain. F(1) is attached to F(0) by a central stalk formed by the gamma and epsilon chains, while a peripheral stalk is formed by the delta, b and b' chains.

The protein resides in the plastid. It is found in the chloroplast thylakoid membrane. In terms of biological role, f(1)F(0) ATP synthase produces ATP from ADP in the presence of a proton or sodium gradient. F-type ATPases consist of two structural domains, F(1) containing the extramembraneous catalytic core and F(0) containing the membrane proton channel, linked together by a central stalk and a peripheral stalk. During catalysis, ATP synthesis in the catalytic domain of F(1) is coupled via a rotary mechanism of the central stalk subunits to proton translocation. Component of the F(0) channel, it forms part of the peripheral stalk, linking F(1) to F(0). The protein is ATP synthase subunit b, chloroplastic of Populus alba (White poplar).